The primary structure comprises 79 residues: Acyl carrier protein (79 aa).

One can recognise a Carrier domain in the interval A4–K79. An O-(pantetheine 4'-phosphoryl)serine modification is found at S39.

This sequence belongs to the acyl carrier protein (ACP) family. In terms of processing, 4'-phosphopantetheine is transferred from CoA to a specific serine of apo-ACP by AcpS. This modification is essential for activity because fatty acids are bound in thioester linkage to the sulfhydryl of the prosthetic group.

It is found in the cytoplasm. It functions in the pathway lipid metabolism; fatty acid biosynthesis. In terms of biological role, carrier of the growing fatty acid chain in fatty acid biosynthesis. The chain is Acyl carrier protein from Chlorobaculum parvum (strain DSM 263 / NCIMB 8327) (Chlorobium vibrioforme subsp. thiosulfatophilum).